A 265-amino-acid polypeptide reads, in one-letter code: Ribonuclease 3 (265 aa).

An RNase III domain is found at leucine 34–glutamine 157. Glutamate 70 is a binding site for Mg(2+). Aspartate 74 is a catalytic residue. Residues aspartate 143 and glutamate 146 each coordinate Mg(2+). Residue glutamate 146 is part of the active site. Residues aspartate 185–lysine 256 form the DRBM domain.

This sequence belongs to the ribonuclease III family. As to quaternary structure, homodimer. Requires Mg(2+) as cofactor.

Its subcellular location is the cytoplasm. The catalysed reaction is Endonucleolytic cleavage to 5'-phosphomonoester.. Digests double-stranded RNA. Involved in the processing of primary rRNA transcript to yield the immediate precursors to the large and small rRNAs (23S and 16S). Processes some mRNAs, and tRNAs when they are encoded in the rRNA operon. Processes pre-crRNA and tracrRNA of type II CRISPR loci if present in the organism. In Psychrobacter arcticus (strain DSM 17307 / VKM B-2377 / 273-4), this protein is Ribonuclease 3.